The primary structure comprises 56 residues: U-limacoditoxin(3)-Dv21 (56 aa).

The signal sequence occupies residues 1 to 19 (MKKVIMLLLIFALFAYALS). 3 cysteine pairs are disulfide-bonded: Cys26-Cys41, Cys33-Cys46, and Cys40-Cys53.

Belongs to the limacoditoxin-22 family. In terms of tissue distribution, expressed by the venom secretory cell of the spine. The spine is a cuticular structure containing a single large nucleated venom-secreting cell at its base. It is an independent unit capable of producing, storing and injecting venom. On the back of D.vulnerans caterpillars, spines are grouped together by 50 to 100 to form scoli, of which there are eight in D.vulnerans.

It is found in the secreted. Probable toxin. Shows a moderate antiparasitic activity against the major pathogenic nematode of ruminants (H.contortus, IC(50)=22.1 uM). Does not show insecticidal activities. Does not induce increase in intracellular calcium in mouse DRG neurons, suggesting that it does not induce pain. The protein is U-limacoditoxin(3)-Dv21 of Doratifera vulnerans (Mottled cup moth).